Consider the following 319-residue polypeptide: Zinc finger protein C19B12.07c (319 aa).

The C2H2-type zinc-finger motif lies at 146–170 (FRCLCCHVPCKNKKLLREHMNNKRH).

The protein belongs to the ZNF277 family.

The protein localises to the nucleus. This chain is Zinc finger protein C19B12.07c, found in Schizosaccharomyces pombe (strain 972 / ATCC 24843) (Fission yeast).